A 130-amino-acid polypeptide reads, in one-letter code: MAQVEYRGTGRRKNSVARVRLVPGEGNITVNERDVREYLPFESLILDLNQPFDVTETKGNYDVLVNVHGGGFTGQAQAIRHGIARALLEADPEYRGSLKRAGLLTRDPRMKERKKPGLKKARRSPQFSKR.

The tract at residues 98–130 (LKRAGLLTRDPRMKERKKPGLKKARRSPQFSKR) is disordered. Basic residues predominate over residues 111 to 130 (KERKKPGLKKARRSPQFSKR).

Belongs to the universal ribosomal protein uS9 family.

The chain is Small ribosomal subunit protein uS9 from Staphylococcus haemolyticus (strain JCSC1435).